A 1138-amino-acid chain; its full sequence is Myelin regulatory factor (1138 aa).

The Cytoplasmic portion of the chain corresponds to 1–768 (MEVVDETEAL…CISQRFLQGT (768 aa)). Disordered stretches follow at residues 56–150 (TASF…YSPQ), 171–200 (VSSR…HYPV), 246–267 (AELP…NTLN), and 279–339 (PGTV…SDSL). A compositionally biased stretch (low complexity) spans 67–88 (PGSSGLHHLSPPGSGPSPGRHG). The residue at position 123 (Lys-123) is an N6-acetyllysine. Over residues 178-198 (PPPPPAHLPGPPPPPPPPPHY) the composition is skewed to pro residues. Residues 250–541 (PHPSKKRKHS…SNPGQFESDS (292 aa)) constitute a DNA-binding region (NDT80). Residues 254-257 (KKRK) carry the Nuclear localization signal motif. Positions 286-302 (PPHPARAPSPPWPPQGP) are enriched in pro residues. The span at 329-339 (SPGLLQDSDSL) shows a compositional bias: low complexity. Positions 491–494 (KKGK) match the Nuclear localization signal motif. One can recognise a Peptidase S74 domain in the interval 587–696 (SDLRAKEHVQ…KLTDNLETRI (110 aa)). Residues 680-711 (GAVKELCKLTDNLETRIDELERWSHKLAKLRR) adopt a coiled-coil conformation. A compositionally biased stretch (polar residues) spans 721-733 (SGAFSHAGSQFSR). A disordered region spans residues 721-753 (SGAFSHAGSQFSRAGSVPHKKRPPKLANKSSPA). Residues 765–1003 (LQGTIIALVV…QGQLDPAPSL (239 aa)) form a required for interaction with TMEM98 region. A helical membrane pass occupies residues 769-789 (IIALVVVMAFSVVSMSTLYVL). The Lumenal segment spans residues 790–1138 (SLRSEEDLVD…YYFHFYRLCD (349 aa)). Over residues 891 to 900 (ATDPALGPTL) the composition is skewed to low complexity. Disordered stretches follow at residues 891-922 (ATDP…APLP) and 951-999 (ASPV…QLDP). 2 stretches are compositionally biased toward polar residues: residues 961–974 (QSKT…NLQS) and 987–999 (PAQF…QLDP). Asn-1030, Asn-1052, and Asn-1116 each carry an N-linked (GlcNAc...) asparagine glycan.

This sequence belongs to the MRF family. In terms of assembly, homotrimer. Interacts (via C-terminal region) with TMEM98; the interaction inhibits MYRF self-cleavage. Glycosylated. In terms of processing, follows autocatalytic cleavage via the peptidase S74 domain. Autoprocessing is apparently constitutive and is essential for transcriptional activity. Autocatalytic cleavage is inhibited by interaction with TMEM98. In terms of tissue distribution, specifically expressed by postmitotic oligodendrocytes in the CNS. Not detected in the peripheral nervous system (PNS).

Its subcellular location is the endoplasmic reticulum membrane. It is found in the nucleus. The protein localises to the cytoplasm. In terms of biological role, constitutes a precursor of the transcription factor. Mediates the autocatalytic cleavage that releases the Myelin regulatory factor, N-terminal component that specifically activates transcription of central nervous system (CNS) myelin genes. Membrane-bound part that has no transcription factor activity and remains attached to the endoplasmic reticulum membrane following cleavage. Its function is as follows. Transcription factor that specifically activates expression of myelin genes such as MBP, MOG, MAG, DUSP15 and PLP1 during oligodendrocyte (OL) maturation, thereby playing a central role in oligodendrocyte maturation and CNS myelination. Specifically recognizes and binds DNA sequence 5'-CTGGYAC-3' in the regulatory regions of myelin-specific genes and directly activates their expression. Not only required during oligodendrocyte differentiation but is also required on an ongoing basis for the maintenance of expression of myelin genes and for the maintenance of a mature, viable oligodendrocyte phenotype. The sequence is that of Myelin regulatory factor (Myrf) from Mus musculus (Mouse).